A 418-amino-acid chain; its full sequence is Putative competence-damage inducible protein (418 aa).

Belongs to the CinA family.

The chain is Putative competence-damage inducible protein from Streptococcus pneumoniae serotype 2 (strain D39 / NCTC 7466).